The following is a 167-amino-acid chain: Phosphopantetheine adenylyltransferase (167 aa).

Residue S8 participates in substrate binding. ATP is bound by residues S8–F9 and H16. Positions 40, 74, and 88 each coordinate substrate. Residues G89–R91, E99, and W123–S129 contribute to the ATP site.

It belongs to the bacterial CoaD family. Homohexamer. It depends on Mg(2+) as a cofactor.

It is found in the cytoplasm. The catalysed reaction is (R)-4'-phosphopantetheine + ATP + H(+) = 3'-dephospho-CoA + diphosphate. It participates in cofactor biosynthesis; coenzyme A biosynthesis; CoA from (R)-pantothenate: step 4/5. Its function is as follows. Reversibly transfers an adenylyl group from ATP to 4'-phosphopantetheine, yielding dephospho-CoA (dPCoA) and pyrophosphate. The protein is Phosphopantetheine adenylyltransferase of Deinococcus radiodurans (strain ATCC 13939 / DSM 20539 / JCM 16871 / CCUG 27074 / LMG 4051 / NBRC 15346 / NCIMB 9279 / VKM B-1422 / R1).